A 246-amino-acid chain; its full sequence is Histone H1 (246 aa).

Disordered regions lie at residues 1–51 (MATD…PTHL) and 105–246 (GGKL…KAKK). Positions 9–34 (PAPLVDAAPEAPADAPAAPAADANAA) are enriched in low complexity. Residues 35–47 (KAKKATAPKKRAS) show a composition bias toward basic residues. The region spanning 49 to 119 (THLPYAEMVS…KVKNSYKLSS (71 aa)) is the H15 domain. 2 stretches are compositionally biased toward basic residues: residues 129-189 (AAPK…KAKP) and 198-208 (PLAKKAGRAKA). The segment covering 224 to 235 (KKAAPSKKAATP) has biased composition (low complexity).

This sequence belongs to the histone H1/H5 family.

The protein resides in the nucleus. The protein localises to the chromosome. In terms of biological role, histones H1 are necessary for the condensation of nucleosome chains into higher-order structures. This chain is Histone H1, found in Zea mays (Maize).